We begin with the raw amino-acid sequence, 153 residues long: Actin-related protein 2/3 complex subunit 5-like protein (153 aa).

Ser-64 carries the phosphoserine modification.

It belongs to the ARPC5 family. As to quaternary structure, may be a component of the Arp2/3 complex in which it may replace ARPC5.

It is found in the cytoplasm. Its subcellular location is the cytoskeleton. In terms of biological role, may function as component of the Arp2/3 complex which is involved in regulation of actin polymerization and together with an activating nucleation-promoting factor (NPF) mediates the formation of branched actin networks. The sequence is that of Actin-related protein 2/3 complex subunit 5-like protein (Arpc5l) from Rattus norvegicus (Rat).